Reading from the N-terminus, the 356-residue chain is MSQSGKNGLTYSDAGVDIDAGNLMVEKIKPHVRSTRRPGADGEIGGFGGLFDLKAAGFSDPVLVAANDGVGTKLKIAIDADKHDTVGIDLVAMCVNDLVVQGAEPLFFLDYFATGKLDPDQGAAIVAGIAAGCREAGCALIGGETAEMPGMYSGGDYDLAGFAVGAAERGQLLPAGDIAEGDVILGLASSGVHSNGYSLVRKIVSLSGLAWDAPAPFGEGTLADLLMTPTRIYVKPLLKAIRETGAIKALAHITGGGFPENIPRVLPKHLAAEIDLGAIKPPAVFSWLAKTGGVAANEMLRTFNCGVGMIAVVPASEAEKVAAVLAGEGETVFTLGRMVARAEGAPGTIYKGNLAI.

It belongs to the AIR synthase family.

It localises to the cytoplasm. The catalysed reaction is 2-formamido-N(1)-(5-O-phospho-beta-D-ribosyl)acetamidine + ATP = 5-amino-1-(5-phospho-beta-D-ribosyl)imidazole + ADP + phosphate + H(+). The protein operates within purine metabolism; IMP biosynthesis via de novo pathway; 5-amino-1-(5-phospho-D-ribosyl)imidazole from N(2)-formyl-N(1)-(5-phospho-D-ribosyl)glycinamide: step 2/2. In Rhizobium meliloti (strain 1021) (Ensifer meliloti), this protein is Phosphoribosylformylglycinamidine cyclo-ligase.